Here is a 165-residue protein sequence, read N- to C-terminus: UPF0303 protein Bcep18194_A4700 (165 aa).

Belongs to the UPF0303 family.

This is UPF0303 protein Bcep18194_A4700 from Burkholderia lata (strain ATCC 17760 / DSM 23089 / LMG 22485 / NCIMB 9086 / R18194 / 383).